The primary structure comprises 139 residues: MASTFVCSLPNPFFAFPVKATTPSTANHTLLGSRRGCLRIKAISTKWEPTKVVPQADRVLVRLEDLPIKSSGGVLLPKAAVKFERYLTGEIISVGSEVGQQVGPGKRVLFSDVSAYEVDLGTDARHCFCKESDLLALVE.

The transit peptide at 1–39 (MASTFVCSLPNPFFAFPVKATTPSTANHTLLGSRRGCLR) directs the protein to the chloroplast. The tract at residues 51–138 (KVVPQADRVL…CKESDLLALV (88 aa)) is cpn-10 domain.

Belongs to the GroES chaperonin family. In terms of tissue distribution, expressed in leaves and stems. Expressed at low levels in germinating seeds, seedlings, rosettes leaves, flowers and siliques.

It localises to the plastid. It is found in the chloroplast stroma. In terms of biological role, functions as a co-chaperone for protein folding in chloroplasts. The protein is 10 kDa chaperonin 2, chloroplastic of Arabidopsis thaliana (Mouse-ear cress).